A 312-amino-acid chain; its full sequence is Malate dehydrogenase (312 aa).

Residues 12-17 and Asp36 contribute to the NAD(+) site; that span reads GAGFTG. The substrate site is built by Arg87 and Arg93. NAD(+) contacts are provided by residues Asn100 and 123 to 125; that span reads LTN. Asn125 is a binding site for substrate. The residue at position 149 (Ser149) is a Phosphoserine. Arg156 is a substrate binding site. His180 functions as the Proton acceptor in the catalytic mechanism.

The protein belongs to the LDH/MDH superfamily. MDH type 3 family.

The enzyme catalyses (S)-malate + NAD(+) = oxaloacetate + NADH + H(+). In terms of biological role, catalyzes the reversible oxidation of malate to oxaloacetate. The chain is Malate dehydrogenase from Bacillus licheniformis (strain ATCC 14580 / DSM 13 / JCM 2505 / CCUG 7422 / NBRC 12200 / NCIMB 9375 / NCTC 10341 / NRRL NRS-1264 / Gibson 46).